The following is a 100-amino-acid chain: Small ribosomal subunit protein bS18c (100 aa).

The span at 1 to 19 shows a compositional bias: basic residues; sequence MDKSKRPFRKSKRSFRRRL. The interval 1–23 is disordered; it reads MDKSKRPFRKSKRSFRRRLPPIG.

This sequence belongs to the bacterial ribosomal protein bS18 family. In terms of assembly, part of the 30S ribosomal subunit.

It localises to the plastid. It is found in the chloroplast. This is Small ribosomal subunit protein bS18c from Calycanthus floridus var. glaucus (Eastern sweetshrub).